The chain runs to 97 residues: Meromycolate extension acyl carrier protein (97 aa).

The Carrier domain maps to 3–81 (ASQQEIIAGL…DVVAYIQKLE (79 aa)). Residue Ser-41 is modified to O-(pantetheine 4'-phosphoryl)serine.

This sequence belongs to the acyl carrier protein (ACP) family. 4'-phosphopantetheine is transferred from CoA to a specific serine of apo-AcpM.

It localises to the cytoplasm. Acyl carrier protein involved in meromycolate extension. The sequence is that of Meromycolate extension acyl carrier protein (acpM) from Mycolicibacterium aurum (Mycobacterium aurum).